The following is a 483-amino-acid chain: Centrosomal protein cep57l1 (483 aa).

The stretch at glutamate 94–asparagine 228 forms a coiled coil. Disordered stretches follow at residues alanine 237–proline 261, proline 303–arginine 325, and lysine 416–serine 460. The segment covering arginine 243–lysine 252 has biased composition (basic residues). The stretch at glutamate 375–glutamine 418 forms a coiled coil. The segment covering arginine 420–glycine 435 has biased composition (polar residues).

The protein belongs to the translokin family. Interacts with clip1, mis12, ndc80 and zwint. Interacts with gamma-tubulin.

Its subcellular location is the cytoplasm. The protein localises to the cytoskeleton. It is found in the microtubule organizing center. It localises to the centrosome. The protein resides in the chromosome. Its subcellular location is the centromere. The protein localises to the kinetochore. It is found in the spindle. Its function is as follows. Required for spindle microtubule attachment to both kinetochores and centrosomes. Also functions to tether minus-ends of spindle microtubules to centrosomes. May act by forming ring-like structures around microtubules, or by serving as a cross-linker or scaffold at the attachment site. This is Centrosomal protein cep57l1 (cep57l1) from Xenopus tropicalis (Western clawed frog).